We begin with the raw amino-acid sequence, 402 residues long: Acetate kinase (402 aa).

A Mg(2+)-binding site is contributed by Asn-10. Lys-17 lines the ATP pocket. Arg-89 lines the substrate pocket. Residue Asp-148 is the Proton donor/acceptor of the active site. Residues 208-212 (HLGNG), 283-285 (DCR), and 334-338 (GIGEN) each bind ATP. A Mg(2+)-binding site is contributed by Glu-389.

This sequence belongs to the acetokinase family. In terms of assembly, homodimer. The cofactor is Mg(2+). Mn(2+) is required as a cofactor.

It is found in the cytoplasm. The catalysed reaction is acetate + ATP = acetyl phosphate + ADP. It participates in metabolic intermediate biosynthesis; acetyl-CoA biosynthesis; acetyl-CoA from acetate: step 1/2. Catalyzes the formation of acetyl phosphate from acetate and ATP. Can also catalyze the reverse reaction. This Actinobacillus pleuropneumoniae serotype 7 (strain AP76) protein is Acetate kinase.